The chain runs to 154 residues: Ribonuclease H (154 aa).

In terms of domain architecture, RNase H type-1 spans 1 to 142; sequence MRKQVEIFTD…CDELARAAAG (142 aa). 4 residues coordinate Mg(2+): Asp-10, Glu-48, Asp-70, and Asp-134.

Belongs to the RNase H family. In terms of assembly, monomer. Mg(2+) serves as cofactor.

The protein resides in the cytoplasm. It carries out the reaction Endonucleolytic cleavage to 5'-phosphomonoester.. Endonuclease that specifically degrades the RNA of RNA-DNA hybrids. The chain is Ribonuclease H from Pectobacterium carotovorum subsp. carotovorum (strain PC1).